Consider the following 303-residue polypeptide: Probable phytol kinase, chloroplastic (303 aa).

The transit peptide at 1 to 49 (MAAAAAWTGAASPNSLLLSRSPPHAAALAPSPGSSMRRRLLLGVGTPAV) directs the protein to the chloroplast. Helical transmembrane passes span 98-118 (VVHV…SNST), 122-144 (YFAA…RLYT), 168-188 (YVLV…IGIV), 227-247 (FISG…LGYI), 254-274 (ALGK…VPVT), and 276-296 (VVDD…LLFS).

It belongs to the polyprenol kinase family.

The protein localises to the plastid. The protein resides in the chloroplast membrane. The enzyme catalyses phytol + CTP = phytyl phosphate + CDP + H(+). The protein operates within cofactor biosynthesis; tocopherol biosynthesis. Functionally, involved in the activation and reutilization of phytol from chlorophyll degradation in plant metabolism, including tocopherol biosynthesis. Catalyzes the conversion of phytol to phytol monophosphate (PMP). This chain is Probable phytol kinase, chloroplastic, found in Zea mays (Maize).